Reading from the N-terminus, the 369-residue chain is Serpentine receptor class epsilon-2 (369 aa).

The Extracellular segment spans residues 1 to 20 (MLIQYHKISNNDPNRIQLLS). Residues 21 to 41 (MIFCEIILLIFELFEFAAIIF) traverse the membrane as a helical segment. Topologically, residues 42 to 55 (NMSRYQFHFNLKVV) are cytoplasmic. Residues 56–76 (VGYAIFAYWFDIIARITIAFF) traverse the membrane as a helical segment. Over 77–118 (EIGLFNLDDQTIAVETEKLPWNYKNMFFMLLFCCSTYRVYFM) the chain is Extracellular. A helical membrane pass occupies residues 119–139 (FLICSVTLLLAVERFLATIWV). The Cytoplasmic portion of the chain corresponds to 140–148 (STYESVQHK). A helical membrane pass occupies residues 149–169 (WVSIVLTSTNSIAGIFGSLLF). Over 170-178 (HYELIFDTA) the chain is Extracellular. A helical transmembrane segment spans residues 179–199 (VWCSLGLCFNFVSIFLYVILF). Over 200 to 234 (NSNKSKIELCQTREITQSYTLSLRFQLNENLKIMN) the chain is Cytoplasmic. Residues 235 to 255 (WIKNSILVVTCFNTLLAGFLI) traverse the membrane as a helical segment. The Extracellular portion of the chain corresponds to 256-274 (ASNNEYLKNDYPVLVKCCH). A helical transmembrane segment spans residues 275 to 295 (TFLNLGIAIYAQVVFFVAILA). Residues 296 to 369 (DRHFRTYFLR…VAKKKRFWRV (74 aa)) lie on the Cytoplasmic side of the membrane.

Belongs to the nematode receptor-like protein sre family.

The protein localises to the cell membrane. This Caenorhabditis elegans protein is Serpentine receptor class epsilon-2 (sre-2).